The following is a 157-amino-acid chain: 2-C-methyl-D-erythritol 2,4-cyclodiphosphate synthase (157 aa).

A divalent metal cation is bound by residues Asp8 and His10. Residues 8-10 and 34-35 contribute to the 4-CDP-2-C-methyl-D-erythritol 2-phosphate site; these read DVH and HS. His42 lines the a divalent metal cation pocket. 4-CDP-2-C-methyl-D-erythritol 2-phosphate contacts are provided by residues 56–58, 61–65, 100–106, 132–135, Phe139, and Arg142; these read DIG, FPDTD, AQAPKMA, and TTTE.

Belongs to the IspF family. In terms of assembly, homotrimer. It depends on a divalent metal cation as a cofactor.

It catalyses the reaction 4-CDP-2-C-methyl-D-erythritol 2-phosphate = 2-C-methyl-D-erythritol 2,4-cyclic diphosphate + CMP. It participates in isoprenoid biosynthesis; isopentenyl diphosphate biosynthesis via DXP pathway; isopentenyl diphosphate from 1-deoxy-D-xylulose 5-phosphate: step 4/6. In terms of biological role, involved in the biosynthesis of isopentenyl diphosphate (IPP) and dimethylallyl diphosphate (DMAPP), two major building blocks of isoprenoid compounds. Catalyzes the conversion of 4-diphosphocytidyl-2-C-methyl-D-erythritol 2-phosphate (CDP-ME2P) to 2-C-methyl-D-erythritol 2,4-cyclodiphosphate (ME-CPP) with a corresponding release of cytidine 5-monophosphate (CMP). This Pseudomonas fluorescens (strain SBW25) protein is 2-C-methyl-D-erythritol 2,4-cyclodiphosphate synthase.